Here is a 207-residue protein sequence, read N- to C-terminus: Probable RNA 2'-phosphotransferase (207 aa).

It belongs to the KptA/TPT1 family.

In terms of biological role, removes the 2'-phosphate from RNA via an intermediate in which the phosphate is ADP-ribosylated by NAD followed by a presumed transesterification to release the RNA and generate ADP-ribose 1''-2''-cyclic phosphate (APPR&gt;P). May function as an ADP-ribosylase. The sequence is that of Probable RNA 2'-phosphotransferase from Methanosarcina barkeri (strain Fusaro / DSM 804).